The following is a 1201-amino-acid chain: DNA-directed RNA polymerase subunit beta (1201 aa).

A disordered region spans residues 1165-1201; sequence DALSKFKQQQDEKAADKAAKADAAKPSETTNAQQDNQ. Residues 1172-1189 show a composition bias toward basic and acidic residues; it reads QQQDEKAADKAAKADAAK. A compositionally biased stretch (polar residues) spans 1191–1201; that stretch reads SETTNAQQDNQ.

Belongs to the RNA polymerase beta chain family. The RNAP catalytic core consists of 2 alpha, 1 beta, 1 beta' and 1 omega subunit. When a sigma factor is associated with the core the holoenzyme is formed, which can initiate transcription.

It carries out the reaction RNA(n) + a ribonucleoside 5'-triphosphate = RNA(n+1) + diphosphate. Functionally, DNA-dependent RNA polymerase catalyzes the transcription of DNA into RNA using the four ribonucleoside triphosphates as substrates. The chain is DNA-directed RNA polymerase subunit beta from Lactiplantibacillus plantarum (strain ATCC BAA-793 / NCIMB 8826 / WCFS1) (Lactobacillus plantarum).